We begin with the raw amino-acid sequence, 437 residues long: O-methyltransferase 3 (437 aa).

The disordered stretch occupies residues 1-21; the sequence is MNNKTSNGDITNDEPTVGSKR. Positions 146-180 form a coiled coil; sequence SDNLYQDKDDLEKQEKEREKKMANLLSKNVDIKEL. Positions 408–437 are disordered; it reads DPINNNNNNNNNNNNNNNNTTTTTSTTTTN. Residues 411–437 are compositionally biased toward low complexity; that stretch reads NNNNNNNNNNNNNNNNTTTTTSTTTTN.

This sequence belongs to the methyltransferase superfamily. METL family.

Functionally, probable methyltransferase. The polypeptide is O-methyltransferase 3 (omt3) (Dictyostelium discoideum (Social amoeba)).